Here is a 793-residue protein sequence, read N- to C-terminus: MKVSKLWLREWVNFSLTEQELAEQLTMAGLEVDAVNPVAGQFTHVIVAEVLNTKPHPDADKLTLCEVNINKDKPLKIVCGAANVRPGLRVALAMIGAHLPGGLQIKESKLRGELSQGMLCSATELGLAEHSEGIMELSDEAPIGMDLREYLALDDHVFDIDLTPNRADCFSILGVAREVAVLNKLPLIEQPIVTVPPAIDDGLRVNLIHSEACPRYCGRIIRNLNLEAKTPLWMAERLRRGGIRTLHPVVDVMNYVMLELGQPMHAFDLSKINGEINVRYSASGEQLELLDGQEVVLNDNVLVIADKEKPLAMAGIMGGANSAVQEQTQHIFLESAYFNPVTIAGVARKYGLFSDSSQRFERGVDPCLQSKALERATELILSISGGEPGPVIESFDKKFLPGTVSFLFDTTKVKKLTGLSIPLNEMKNLLEGLGVVIIKETNHFFEVTIPSHRVDLQQDADLVEEIIRLYGYDKLQAQPMQTSVQAGLISAKEKIATHVSSWFSAKGYHETISYSFVDPELQEALYPQKEFMELLNPISSELSQMRAGMWPGLIASMIYNSHRQQTAVKFFEIGVVFDLDGGQLKERSCIAGLLMGEQGNLNWSESARLFDFYDLKGDLQSLFASLKLDDVEFIQSSHHALHPGQSAQIVINGKHSGWIGVLHPRLSDAFDLDQDVVLFELNLESLINPTIPLYKPISKYPQIRRDLSFLVDRQISAMQIERVIRNTVKEDWLKSFDVFDVYMGKGIPEDKKSIAVAMTLQDDTRTLVDAEINLTISAIIKKLENEFSILLRE.

In terms of domain architecture, tRNA-binding spans 39-148 (AGQFTHVIVA…DEAPIGMDLR (110 aa)). One can recognise a B5 domain in the interval 401-477 (PGTVSFLFDT…RLYGYDKLQA (77 aa)). Mg(2+) contacts are provided by aspartate 455, aspartate 461, glutamate 464, and glutamate 465. The 95-residue stretch at 698–792 (SKYPQIRRDL…LENEFSILLR (95 aa)) folds into the FDX-ACB domain.

It belongs to the phenylalanyl-tRNA synthetase beta subunit family. Type 1 subfamily. As to quaternary structure, tetramer of two alpha and two beta subunits. The cofactor is Mg(2+).

The protein localises to the cytoplasm. It carries out the reaction tRNA(Phe) + L-phenylalanine + ATP = L-phenylalanyl-tRNA(Phe) + AMP + diphosphate + H(+). This Legionella pneumophila (strain Lens) protein is Phenylalanine--tRNA ligase beta subunit.